Consider the following 149-residue polypeptide: Transcriptional repressor NrdR (149 aa).

A zinc finger spans residues 3 to 34 (CPFCFAVDTKVIDSRLVGEGSSVRRRRQCLVC). The region spanning 49-139 (PRVVKSNDVR…VYRSFEDIKE (91 aa)) is the ATP-cone domain.

Belongs to the NrdR family. The cofactor is Zn(2+).

Negatively regulates transcription of bacterial ribonucleotide reductase nrd genes and operons by binding to NrdR-boxes. The chain is Transcriptional repressor NrdR from Klebsiella pneumoniae (strain 342).